The sequence spans 264 residues: SPRY domain-containing SOCS box protein 2 (264 aa).

A compositionally biased stretch (polar residues) spans 1–18; sequence MGQTALARGSSSTPSSHA. Residues 1 to 53 are disordered; the sequence is MGQTALARGSSSTPSSHALYSDLSPPEGLEELLSAPPPDLGAQRHHGWNPKDC. Over residues 21 to 34 the composition is skewed to low complexity; sequence SDLSPPEGLEELLS. The B30.2/SPRY domain maps to 26–221; the sequence is PEGLEELLSA…VRIRYLGERR (196 aa). The region spanning 222–264 is the SOCS box domain; that stretch reads AEEPQSLLHLSRLCVRHALGDTRLGQISSLPLPPAMKRYLLYK.

It belongs to the SPSB family. Component of the probable ECS(SPSB2) E3 ubiquitin-protein ligase complex which contains CUL5, RNF7/RBX2, Elongin BC complex and SPSB2. Interacts with CUL5, RNF7, ELOB and ELOC. Interacts with MET. Interacts (via B30.2/SPRY domain) with PAWR; this interaction occurs in association with the Elongin BC complex. Interacts with NOS2.

It is found in the cytoplasm. The protein resides in the cytosol. Its pathway is protein modification; protein ubiquitination. Functionally, substrate recognition component of a SCF-like ECS (Elongin BC-CUL2/5-SOCS-box protein) E3 ubiquitin-protein ligase complex which mediates the ubiquitination and subsequent proteasomal degradation of target proteins. Negatively regulates nitric oxide (NO) production and limits cellular toxicity in activated macrophages by mediating the ubiquitination and proteasomal degradation of NOS2. Acts as a bridge which links NOS2 with the ECS E3 ubiquitin ligase complex components ELOC and CUL5. In Rattus norvegicus (Rat), this protein is SPRY domain-containing SOCS box protein 2 (Spsb2).